The primary structure comprises 145 residues: Cystin-1 (145 aa).

A disordered region spans residues 1 to 129 (MGSGSSRSGR…PEGQSAISYD (129 aa)). The N-myristoyl glycine moiety is linked to residue Gly-2. The Ciliary targeting motif motif lies at 29–33 (ASEGG). The residue at position 116 (Ser-116) is a Phosphoserine.

Interacts (when myristoylated) with UNC119 and UNC119B; interaction is required for localization to cilium. In terms of tissue distribution, expressed primarily in the kidney and liver. Expressed at lower levels in the lung, brain and heart.

Its subcellular location is the cell projection. It localises to the cilium membrane. The protein resides in the cytoplasm. The protein localises to the cytoskeleton. It is found in the cilium axoneme. The protein is Cystin-1 (Cys1) of Mus musculus (Mouse).